We begin with the raw amino-acid sequence, 490 residues long: Aspartyl/glutamyl-tRNA(Asn/Gln) amidotransferase subunit B (490 aa).

It belongs to the GatB/GatE family. GatB subfamily. Heterotrimer of A, B and C subunits.

It catalyses the reaction L-glutamyl-tRNA(Gln) + L-glutamine + ATP + H2O = L-glutaminyl-tRNA(Gln) + L-glutamate + ADP + phosphate + H(+). It carries out the reaction L-aspartyl-tRNA(Asn) + L-glutamine + ATP + H2O = L-asparaginyl-tRNA(Asn) + L-glutamate + ADP + phosphate + 2 H(+). Its function is as follows. Allows the formation of correctly charged Asn-tRNA(Asn) or Gln-tRNA(Gln) through the transamidation of misacylated Asp-tRNA(Asn) or Glu-tRNA(Gln) in organisms which lack either or both of asparaginyl-tRNA or glutaminyl-tRNA synthetases. The reaction takes place in the presence of glutamine and ATP through an activated phospho-Asp-tRNA(Asn) or phospho-Glu-tRNA(Gln). This chain is Aspartyl/glutamyl-tRNA(Asn/Gln) amidotransferase subunit B, found in Burkholderia vietnamiensis (strain G4 / LMG 22486) (Burkholderia cepacia (strain R1808)).